A 236-amino-acid chain; its full sequence is Large ribosomal subunit protein uL3 (236 aa).

It belongs to the universal ribosomal protein uL3 family. Part of the 50S ribosomal subunit. Forms a cluster with proteins L14 and L19.

Functionally, one of the primary rRNA binding proteins, it binds directly near the 3'-end of the 23S rRNA, where it nucleates assembly of the 50S subunit. The sequence is that of Large ribosomal subunit protein uL3 from Anaeromyxobacter dehalogenans (strain 2CP-C).